The following is a 596-amino-acid chain: Chloride intracellular channel protein 6 (596 aa).

The tract at residues 1 to 360 (MAEATEPKEV…ALEEGDPGQE (360 aa)) is disordered. The segment covering 34-48 (LEGREASEEAAEAPR) has biased composition (basic and acidic residues). Ser-40 is subject to Phosphoserine. The span at 65-74 (GCGQDEGTGG) shows a compositional bias: gly residues. The span at 83–98 (GPEAETPGASGAPGEA) shows a compositional bias: low complexity. The span at 118 to 130 (SAQQVQGMSSGLD) shows a compositional bias: polar residues. A compositionally biased stretch (acidic residues) spans 148 to 160 (DPTASEAGEEAES). 2 stretches are compositionally biased toward low complexity: residues 197-213 (GSES…PQPQ) and 225-244 (GGNE…AGEG). Over residues 246-290 (TLGKDGSEEAASEDARVDAHENGDQGKLQEETGEEEARPEPELKG) the composition is skewed to basic and acidic residues. Phosphoserine is present on Ser-304. The segment covering 338–348 (ELGRVNGRREN) has biased composition (basic and acidic residues). The G-site signature appears at 379–382 (CPFS). Residues 381–401 (FSQRLFMILWLKGVIFNVTTV) traverse the membrane as a helical segment. One can recognise a GST C-terminal domain in the interval 425–596 (DGEVKTDVNK…AYSDAAKRMK (172 aa)).

Belongs to the chloride channel CLIC family. As to quaternary structure, monomer (soluble state). Interacts with dopamine receptors DRD2, DRD3 and DRD4. In terms of processing, phosphorylated.

The protein localises to the cytoplasm. Its subcellular location is the cell membrane. The enzyme catalyses chloride(in) = chloride(out). With respect to regulation, channel activity is redox- and pH-regulated. Inhibited by IAA-94. In the soluble state, catalyzes glutaredoxin-like thiol disulfide exchange reactions with reduced glutathione as electron donor. Can insert into membranes and form voltage-dependent chloride-selective channels. The channel opens upon membrane depolarization at positive voltages and closes at negative membrane voltages. May play a critical role in water-secreting cells, possibly through the regulation of chloride ion transport. This is Chloride intracellular channel protein 6 (Clic6) from Mus musculus (Mouse).